A 445-amino-acid polypeptide reads, in one-letter code: Phosphoglucosamine mutase (445 aa).

Ser-99 (phosphoserine intermediate) is an active-site residue. 4 residues coordinate Mg(2+): Ser-99, Asp-242, Asp-244, and Asp-246. The residue at position 99 (Ser-99) is a Phosphoserine.

Belongs to the phosphohexose mutase family. The cofactor is Mg(2+). Post-translationally, activated by phosphorylation.

The catalysed reaction is alpha-D-glucosamine 1-phosphate = D-glucosamine 6-phosphate. In terms of biological role, catalyzes the conversion of glucosamine-6-phosphate to glucosamine-1-phosphate. This Helicobacter acinonychis (strain Sheeba) protein is Phosphoglucosamine mutase.